Consider the following 286-residue polypeptide: ATP synthase gamma chain (286 aa).

This sequence belongs to the ATPase gamma chain family. F-type ATPases have 2 components, CF(1) - the catalytic core - and CF(0) - the membrane proton channel. CF(1) has five subunits: alpha(3), beta(3), gamma(1), delta(1), epsilon(1). CF(0) has three main subunits: a, b and c.

Its subcellular location is the cell membrane. Produces ATP from ADP in the presence of a proton gradient across the membrane. The gamma chain is believed to be important in regulating ATPase activity and the flow of protons through the CF(0) complex. The chain is ATP synthase gamma chain from Bacillus cereus (strain G9842).